A 74-amino-acid chain; its full sequence is MTNVYSLDGILVFGLLFVCTCAYFKKVPRLKTWLLSEKKGVWGVFYKAAVIGTRLHAAVAIACIVMAFYVLFIK.

Residues 1–22 (MTNVYSLDGILVFGLLFVCTCA) form the signal peptide. The Extracellular segment spans residues 23-52 (YFKKVPRLKTWLLSEKKGVWGVFYKAAVIG). A helical membrane pass occupies residues 53 to 73 (TRLHAAVAIACIVMAFYVLFI). Position 74 (Lys-74) is a topological domain, cytoplasmic.

The protein belongs to the KISH family.

The protein localises to the golgi apparatus membrane. In terms of biological role, involved in the early part of the secretory pathway. The sequence is that of Protein kish-B (TMEM167B) from Bos taurus (Bovine).